A 131-amino-acid chain; its full sequence is Small ribosomal subunit protein uS11 (131 aa).

It belongs to the universal ribosomal protein uS11 family. As to quaternary structure, part of the 30S ribosomal subunit. Interacts with proteins S7 and S18. Binds to IF-3.

Functionally, located on the platform of the 30S subunit, it bridges several disparate RNA helices of the 16S rRNA. Forms part of the Shine-Dalgarno cleft in the 70S ribosome. This chain is Small ribosomal subunit protein uS11, found in Buchnera aphidicola subsp. Acyrthosiphon pisum (strain 5A).